We begin with the raw amino-acid sequence, 171 residues long: Dual specificity protein phosphatase OPG106 (171 aa).

The Tyrosine-protein phosphatase domain occupies serine 23–asparagine 171. The Phosphocysteine intermediate role is filled by cysteine 110.

This sequence belongs to the protein-tyrosine phosphatase family. Non-receptor class dual specificity subfamily. As to quaternary structure, homodimer.

It is found in the virion. The protein resides in the host cytoplasm. The catalysed reaction is O-phospho-L-tyrosyl-[protein] + H2O = L-tyrosyl-[protein] + phosphate. The enzyme catalyses O-phospho-L-seryl-[protein] + H2O = L-seryl-[protein] + phosphate. Its activity is regulated as follows. Inhibited by NSC-62914, NSC-28086, NSC-105687, NSC-23173, 540211 and 217691 with IC50 values of 48, 51, 212, 342, 4 and 11 uM, respectively. Its function is as follows. Serine/tyrosine phosphatase which down-regulates cellular antiviral response by dephosphorylating activated host STAT1 and blocking interferon (IFN)-stimulated innate immune responses. Dephosphorylates the OPG144 protein. This chain is Dual specificity protein phosphatase OPG106 (OPG106), found in Homo sapiens (Human).